The following is a 600-amino-acid chain: Netrin-1 (600 aa).

The N-terminal stretch at 1 to 24 (MMRAMWEALAALAAVSCLVGAVRG) is a signal peptide. The Laminin N-terminal domain occupies 47–284 (HPRRCIPDFV…AVSDLQVGGR (238 aa)). N-linked (GlcNAc...) asparagine glycosylation is found at Asn-95, Asn-116, and Asn-131. 14 disulfides stabilise this stretch: Cys-119–Cys-152, Cys-285–Cys-294, Cys-287–Cys-304, Cys-306–Cys-315, Cys-318–Cys-338, Cys-341–Cys-350, Cys-343–Cys-368, Cys-371–Cys-380, Cys-383–Cys-401, Cys-404–Cys-416, Cys-406–Cys-423, Cys-425–Cys-434, Cys-437–Cys-451, and Cys-472–Cys-544. 3 consecutive Laminin EGF-like domains span residues 285–340 (CKCN…ECVA), 341–403 (CNCN…ACKA), and 404–453 (CDCH…PCIK). N-linked (GlcNAc...) asparagine glycosylation occurs at Asn-417. One can recognise an NTR domain in the interval 472–600 (CDSYCKASKG…KFQQREKKEL (129 aa)). A Cell attachment site motif is present at residues 530-532 (RGD).

In terms of assembly, binds to its receptors; DCC, UNC5A, UNC5B, UNC5C and probably UNC5D. Binds to its receptor; DSCAM. Interacts with APP.

It localises to the secreted. The protein resides in the cytoplasm. In terms of biological role, netrins control guidance of CNS commissural axons and peripheral motor axons. Its association with either DCC or some UNC5 receptors will lead to axon attraction or repulsion, respectively. Binding to UNC5C might cause dissociation of UNC5C from polymerized TUBB3 in microtubules and thereby lead to increased microtubule dynamics and axon repulsion. Involved in dorsal root ganglion axon projection towards the spinal cord. It also serves as a survival factor via its association with its receptors which prevent the initiation of apoptosis. Involved in colorectal tumorigenesis by regulating apoptosis. The polypeptide is Netrin-1 (NTN1) (Sus scrofa (Pig)).